A 106-amino-acid chain; its full sequence is Large ribosomal subunit protein eL42 (106 aa).

Belongs to the eukaryotic ribosomal protein eL42 family.

This chain is Large ribosomal subunit protein eL42 (RPL44), found in Kluyveromyces lactis (strain ATCC 8585 / CBS 2359 / DSM 70799 / NBRC 1267 / NRRL Y-1140 / WM37) (Yeast).